The chain runs to 396 residues: Flavohemoprotein (396 aa).

One can recognise a Globin domain in the interval Met1–Ala136. A heme b-binding site is contributed by His85. Residues Tyr95 and Glu135 each act as charge relay system in the active site. The reductase stretch occupies residues Gly147–Leu396. The FAD-binding FR-type domain maps to Glu150–Ala255. FAD is bound by residues Tyr188 and Arg204–Ser207. Position 268–273 (Gly268–Pro273) interacts with NADP(+). Cys389–Pro392 contacts FAD.

The protein belongs to the globin family. Two-domain flavohemoproteins subfamily. This sequence in the C-terminal section; belongs to the flavoprotein pyridine nucleotide cytochrome reductase family. The cofactor is heme b. It depends on FAD as a cofactor.

The enzyme catalyses 2 nitric oxide + NADPH + 2 O2 = 2 nitrate + NADP(+) + H(+). It carries out the reaction 2 nitric oxide + NADH + 2 O2 = 2 nitrate + NAD(+) + H(+). In terms of biological role, is involved in NO detoxification in an aerobic process, termed nitric oxide dioxygenase (NOD) reaction that utilizes O(2) and NAD(P)H to convert NO to nitrate, which protects the bacterium from various noxious nitrogen compounds. Therefore, plays a central role in the inducible response to nitrosative stress. In Escherichia coli O6:H1 (strain CFT073 / ATCC 700928 / UPEC), this protein is Flavohemoprotein.